The following is a 211-amino-acid chain: Ribosomal RNA small subunit methyltransferase G (211 aa).

S-adenosyl-L-methionine is bound by residues glycine 73, phenylalanine 78, and arginine 141.

It belongs to the methyltransferase superfamily. RNA methyltransferase RsmG family.

Its subcellular location is the cytoplasm. It carries out the reaction guanosine(527) in 16S rRNA + S-adenosyl-L-methionine = N(7)-methylguanosine(527) in 16S rRNA + S-adenosyl-L-homocysteine. Specifically methylates the N7 position of guanine in position 527 of 16S rRNA. This is Ribosomal RNA small subunit methyltransferase G from Jannaschia sp. (strain CCS1).